Consider the following 349-residue polypeptide: Protein O-mannose kinase (349 aa).

At 1 to 19 (MGQQHGTRNGLTHRELPRG) the chain is on the cytoplasmic side. A helical; Signal-anchor for type II membrane protein transmembrane segment spans residues 20–42 (VGLLLAMALMNVALYLCLDQLFI). Residues 43 to 349 (SPGRSTADSR…TVMSQTKEML (307 aa)) lie on the Lumenal side of the membrane. Asparagine 66, asparagine 164, and asparagine 219 each carry an N-linked (GlcNAc...) asparagine glycan. The 270-residue stretch at 80–349 (VRQLKRVGEG…TVMSQTKEML (270 aa)) folds into the Protein kinase domain.

Belongs to the protein kinase superfamily. Ser/Thr protein kinase family. STKL subfamily.

It is found in the endoplasmic reticulum membrane. It catalyses the reaction 3-O-[beta-D-GalNAc-(1-&gt;3)-beta-D-GlcNAc-(1-&gt;4)-alpha-D-Man]-L-Thr-[protein] + ATP = 3-O-[beta-D-GalNAc-(1-&gt;3)-beta-D-GlcNAc-(1-&gt;4)-(O-6-P-alpha-D-Man)]-Thr-[protein] + ADP + H(+). Protein O-mannose kinase that specifically mediates phosphorylation at the 6-position of an O-mannose of the trisaccharide (N-acetylgalactosamine (GalNAc)-beta-1,3-N-acetylglucosamine (GlcNAc)-beta-1,4-mannose) to generate phosphorylated O-mannosyl trisaccharide (N-acetylgalactosamine-beta-1,3-N-acetylglucosamine-beta-1,4-(phosphate-6-)mannose). Phosphorylated O-mannosyl trisaccharide is a carbohydrate structure present in alpha-dystroglycan (DAG1), which is required for binding laminin G-like domain-containing extracellular proteins with high affinity. Only shows kinase activity when the GalNAc-beta-3-GlcNAc-beta-terminus is linked to the 4-position of O-mannose, suggesting that this disaccharide serves as the substrate recognition motif. The polypeptide is Protein O-mannose kinase (Pomk) (Mus musculus (Mouse)).